The chain runs to 216 residues: U1 small nuclear ribonucleoprotein C (216 aa).

Residues 4-36 (FFCDYCDVYLTHDSMSVRKAHNAGRNHLRNVVE) form a Matrin-type zinc finger. Composition is skewed to pro residues over residues 68-80 (AMAPPGAFPPPFG), 87-198 (QLPP…PAPP), and 206-216 (PGPPPGLSEKR). The segment at 68–216 (AMAPPGAFPP…GPPPGLSEKR (149 aa)) is disordered.

The protein belongs to the U1 small nuclear ribonucleoprotein C family. In terms of assembly, U1 snRNP is composed of the 7 core Sm proteins B/B', D1, D2, D3, E, F and G that assemble in a heptameric protein ring on the Sm site of the small nuclear RNA to form the core snRNP, and at least 3 U1 snRNP-specific proteins U1-70K, U1-A and U1-C. U1-C interacts with U1 snRNA and the 5' splice-site region of the pre-mRNA.

The protein localises to the nucleus. Component of the spliceosomal U1 snRNP, which is essential for recognition of the pre-mRNA 5' splice-site and the subsequent assembly of the spliceosome. U1-C is directly involved in initial 5' splice-site recognition for both constitutive and regulated alternative splicing. The interaction with the 5' splice-site seems to precede base-pairing between the pre-mRNA and the U1 snRNA. Stimulates commitment or early (E) complex formation by stabilizing the base pairing of the 5' end of the U1 snRNA and the 5' splice-site region. This Aspergillus fumigatus (strain ATCC MYA-4609 / CBS 101355 / FGSC A1100 / Af293) (Neosartorya fumigata) protein is U1 small nuclear ribonucleoprotein C.